The primary structure comprises 69 residues: Large ribosomal subunit protein uL29 (69 aa).

It belongs to the universal ribosomal protein uL29 family.

The polypeptide is Large ribosomal subunit protein uL29 (Rhodopseudomonas palustris (strain TIE-1)).